A 294-amino-acid polypeptide reads, in one-letter code: NADH-cytochrome b5 reductase 2 (294 aa).

The helical transmembrane segment at 11 to 27 (VLLPVVAAATSIGLVYH) threads the bilayer. The 105-residue stretch at 45–149 (DEWIDLKLKK…KGPIVKWKWE (105 aa)) folds into the FAD-binding FR-type domain. 152–187 (QFQSIALIGGGTGITPLYQLLHEITKNPEDKTKVKL) is a binding site for FAD.

This sequence belongs to the flavoprotein pyridine nucleotide cytochrome reductase family. FAD serves as cofactor.

Its subcellular location is the mitochondrion outer membrane. The catalysed reaction is 2 Fe(III)-[cytochrome b5] + NADH = 2 Fe(II)-[cytochrome b5] + NAD(+) + H(+). In terms of biological role, may mediate the reduction of outer membrane cytochrome b5. This Meyerozyma guilliermondii (strain ATCC 6260 / CBS 566 / DSM 6381 / JCM 1539 / NBRC 10279 / NRRL Y-324) (Yeast) protein is NADH-cytochrome b5 reductase 2 (MCR1).